We begin with the raw amino-acid sequence, 208 residues long: Uracil phosphoribosyltransferase (208 aa).

Residues arginine 78, arginine 103, and 130–138 each bind 5-phospho-alpha-D-ribose 1-diphosphate; that span reads DPMLATGGS. Uracil contacts are provided by residues isoleucine 193 and 198–200; that span reads GDA. Aspartate 199 serves as a coordination point for 5-phospho-alpha-D-ribose 1-diphosphate.

Belongs to the UPRTase family. Mg(2+) is required as a cofactor.

The catalysed reaction is UMP + diphosphate = 5-phospho-alpha-D-ribose 1-diphosphate + uracil. Its pathway is pyrimidine metabolism; UMP biosynthesis via salvage pathway; UMP from uracil: step 1/1. With respect to regulation, allosterically activated by GTP. Its function is as follows. Catalyzes the conversion of uracil and 5-phospho-alpha-D-ribose 1-diphosphate (PRPP) to UMP and diphosphate. This Aeromonas salmonicida (strain A449) protein is Uracil phosphoribosyltransferase.